Consider the following 482-residue polypeptide: Transcription initiation factor IIE subunit alpha (482 aa).

One can recognise an HTH TFE/IIEalpha-type domain in the interval 9–99 (VKNLLKFVVR…KYPHAIDAIK (91 aa)). The C4-type zinc-finger motif lies at 124–152 (CPICLTKYTQLEAVQLLNFDRTEFLCSLC). Residues 274-286 (RELQERQAEEKRK) show a composition bias toward basic and acidic residues. 2 disordered regions span residues 274–295 (RELQERQAEEKRKQNAVPEWHK) and 321–482 (AMDS…FEDV). A compositionally biased stretch (polar residues) spans 321–345 (AMDSINPDNEPAQETSYQNNRTLTE). The span at 374 to 401 (EEEEEEEEEEDEEEEEEEEMEDVMDDND) shows a compositional bias: acidic residues. Polar residues predominate over residues 419 to 432 (TAGTAKTESNTSND). Residues 433 to 444 (VKQESINDKTED) show a composition bias toward basic and acidic residues. The segment covering 464–482 (GDDDDDDDDDEMDIEFEDV) has biased composition (acidic residues).

Belongs to the TFIIE alpha subunit family. In terms of assembly, TFIIE is a tetramer of two alpha (TFA1) and two beta (TFA2) subunits.

Its subcellular location is the nucleus. In terms of biological role, recruits TFIIH to the initiation complex and stimulates the RNA polymerase II C-terminal domain kinase and DNA-dependent ATPase activities of TFIIH. Both TFIIH and TFIIE are required for promoter clearance by RNA polymerase. The chain is Transcription initiation factor IIE subunit alpha (TFA1) from Saccharomyces cerevisiae (strain ATCC 204508 / S288c) (Baker's yeast).